The primary structure comprises 141 residues: Large ribosomal subunit protein uL11 (141 aa).

The protein belongs to the universal ribosomal protein uL11 family. As to quaternary structure, part of the ribosomal stalk of the 50S ribosomal subunit. Interacts with L10 and the large rRNA to form the base of the stalk. L10 forms an elongated spine to which L12 dimers bind in a sequential fashion forming a multimeric L10(L12)X complex. In terms of processing, one or more lysine residues are methylated.

Its function is as follows. Forms part of the ribosomal stalk which helps the ribosome interact with GTP-bound translation factors. The chain is Large ribosomal subunit protein uL11 from Chlorobaculum tepidum (strain ATCC 49652 / DSM 12025 / NBRC 103806 / TLS) (Chlorobium tepidum).